The primary structure comprises 553 residues: Putative transport protein Ent638_0015 (553 aa).

Transmembrane regions (helical) follow at residues 4–24, 28–48, 65–85, 95–115, and 158–178; these read IALT…IGNI, GVGL…HFAE, FGLI…FFAS, LFAL…HKLF, and MSYA…MWLV. 2 consecutive RCK C-terminal domains span residues 191–276 and 279–361; these read KKHE…VIGQ and ETSL…MVGN. The next 6 membrane-spanning stretches (helical) occupy residues 371–391, 403–425, 439–459, 464–484, 493–513, and 533–553; these read MLPV…PLYV, AGGP…LYWF, IVLF…DTLA, ISWI…IGIL, YLTL…LAFA, and LVMF…WGMG.

This sequence belongs to the AAE transporter (TC 2.A.81) family. YidE subfamily.

The protein resides in the cell membrane. This Enterobacter sp. (strain 638) protein is Putative transport protein Ent638_0015.